The sequence spans 251 residues: Small ribosomal subunit protein uS2 (251 aa).

The protein belongs to the universal ribosomal protein uS2 family.

This Cereibacter sphaeroides (strain ATCC 17029 / ATH 2.4.9) (Rhodobacter sphaeroides) protein is Small ribosomal subunit protein uS2.